Consider the following 638-residue polypeptide: Chaperone protein DnaK (638 aa).

A Phosphothreonine; by autocatalysis modification is found at Thr-198. The segment at 600–638 is disordered; the sequence is KTQTEGGAQPGAEADGDTGAKGGEKVVDADFEEVKDDKK. Residues 628–638 show a composition bias toward acidic residues; that stretch reads ADFEEVKDDKK.

Belongs to the heat shock protein 70 family.

Acts as a chaperone. The chain is Chaperone protein DnaK from Geobacter metallireducens (strain ATCC 53774 / DSM 7210 / GS-15).